A 467-amino-acid polypeptide reads, in one-letter code: H(+)/Cl(-) exchange transporter ClcA (467 aa).

The Cytoplasmic segment spans residues 1 to 30; it reads MKSQTIPTRRVRGFRRAAVIRQLLSRDKTP. A helical transmembrane segment spans residues 31-67; that stretch reads LTILLLASLTGVLAGLAGVAFEKAVAWVTAHRIEGLA. Residues 68–74 lie on the Periplasmic side of the membrane; the sequence is QVAHIPW. The chain crosses the membrane as a helical span at residues 75-98; the sequence is LVWLLAFLFSALLAMVGYFLVRRF. Residues 99–106 lie on the Cytoplasmic side of the membrane; it reads APEAGGSG. The Selectivity filter part_1 motif lies at 104–108; the sequence is GSGIP. A chloride-binding site is contributed by serine 105. Positions 107–114 form an intramembrane region, helical; the sequence is IPEIEGAL. The Cytoplasmic segment spans residues 115–121; sequence EELRPVR. Residues 122 to 139 form a helical membrane-spanning segment; sequence WWRVLPVKFFGGMGTLGA. Topologically, residues 140 to 145 are periplasmic; sequence GMVLGR. Positions 144–148 match the Selectivity filter part_2 motif; the sequence is GREGP. Residues 146–164 traverse the membrane as a helical segment; that stretch reads EGPMVQMGGNIGRMVLDIF. Residues 165–174 are Cytoplasmic-facing; sequence HRPDAEARHT. 2 consecutive intramembrane regions (helical) follow at residues 175–187 and 191–199; these read LLAT…LAAA and PLAGILFII. Residues 200-212 are Cytoplasmic-facing; sequence EEMRTQFHYNLIS. The helical transmembrane segment at 213-230 threads the bilayer; that stretch reads IKAVFTGVIMSTIVFRIF. The Periplasmic segment spans residues 231–250; sequence NGEKSVIEVGQLTDAPVYTL. The chain crosses the membrane as a helical span at residues 251–279; it reads WLYLLLGIIFGAVGPLFNRLVLGMQDVFA. The Cytoplasmic portion of the chain corresponds to 280 to 285; it reads RIHGGN. Residues 286–307 form a helical membrane-spanning segment; the sequence is TTRWVLLGGAIGGACGLLALWE. Over 308–327 the chain is Periplasmic; it reads PAAAGGGFGLIPIAAAGNFT. The helical transmembrane segment at 328-347 threads the bilayer; that stretch reads VGMLLFIFIARVVTTVFCFS. At 348-352 the chain is on the cytoplasmic side; the sequence is SGAPG. The Selectivity filter part_3 signature appears at 353-357; sequence GIFAP. A helical membrane pass occupies residues 353–374; sequence GIFAPMLALGTLLGSAFGMACA. Positions 354 and 355 each coordinate chloride. Residues 375–384 lie on the Periplasmic side of the membrane; it reads AWFPQWHLQA. Residues 385-399 constitute an intramembrane region (helical); it reads GTFAIAGMGALLAAS. The segment at residues 400 to 402 is an intramembrane region (note=Loop between two helices); the sequence is VRA. An intramembrane region (helical) is located at residues 403-414; that stretch reads PITGIVLVLEMT. The segment at residues 415 to 419 is an intramembrane region (note=Loop between two helices); it reads DNYQL. The helical transmembrane segment at 420-436 threads the bilayer; sequence ILPMIITCLGATLLAQF. Residues 437–467 lie on the Cytoplasmic side of the membrane; the sequence is LGGKPLYSTILARTLAKQEAERQAQADGRNT. Tyrosine 443 is a chloride binding site.

The protein belongs to the chloride channel (TC 2.A.49) family. ClcA subfamily. Homodimer.

Its subcellular location is the cell inner membrane. The catalysed reaction is 2 chloride(in) + H(+)(out) = 2 chloride(out) + H(+)(in). Proton-coupled chloride transporter. Functions as antiport system and exchanges two chloride ions for 1 proton. Probably acts as an electrical shunt for an outwardly-directed proton pump that is linked to amino acid decarboxylation, as part of the extreme acid resistance (XAR) response. In Cronobacter sakazakii (strain ATCC BAA-894) (Enterobacter sakazakii), this protein is H(+)/Cl(-) exchange transporter ClcA.